The chain runs to 282 residues: Adenosylcobinamide-GDP ribazoletransferase (282 aa).

6 consecutive transmembrane segments (helical) span residues 47–67 (GVGI…QALL), 72–92 (FTPL…TGGF), 124–144 (AFGA…LAML), 167–187 (AALL…IWLL), 208–228 (GSLL…GLAL), and 231–251 (ISLI…GALF).

It belongs to the CobS family. Mg(2+) serves as cofactor.

It localises to the cell inner membrane. The enzyme catalyses alpha-ribazole + adenosylcob(III)inamide-GDP = adenosylcob(III)alamin + GMP + H(+). The catalysed reaction is alpha-ribazole 5'-phosphate + adenosylcob(III)inamide-GDP = adenosylcob(III)alamin 5'-phosphate + GMP + H(+). It functions in the pathway cofactor biosynthesis; adenosylcobalamin biosynthesis; adenosylcobalamin from cob(II)yrinate a,c-diamide: step 7/7. Its function is as follows. Joins adenosylcobinamide-GDP and alpha-ribazole to generate adenosylcobalamin (Ado-cobalamin). Also synthesizes adenosylcobalamin 5'-phosphate from adenosylcobinamide-GDP and alpha-ribazole 5'-phosphate. The polypeptide is Adenosylcobinamide-GDP ribazoletransferase (Polaromonas sp. (strain JS666 / ATCC BAA-500)).